A 188-amino-acid chain; its full sequence is Elongation factor P (188 aa).

Residue Lys-34 is modified to N6-(3,6-diaminohexanoyl)-5-hydroxylysine.

This sequence belongs to the elongation factor P family. Post-translationally, may be beta-lysylated on the epsilon-amino group of Lys-34 by the combined action of EpmA and EpmB, and then hydroxylated on the C5 position of the same residue by EpmC (if this protein is present). Lysylation is critical for the stimulatory effect of EF-P on peptide-bond formation. The lysylation moiety may extend toward the peptidyltransferase center and stabilize the terminal 3-CCA end of the tRNA. Hydroxylation of the C5 position on Lys-34 may allow additional potential stabilizing hydrogen-bond interactions with the P-tRNA.

The protein resides in the cytoplasm. It functions in the pathway protein biosynthesis; polypeptide chain elongation. Its function is as follows. Involved in peptide bond synthesis. Alleviates ribosome stalling that occurs when 3 or more consecutive Pro residues or the sequence PPG is present in a protein, possibly by augmenting the peptidyl transferase activity of the ribosome. Modification of Lys-34 is required for alleviation. The sequence is that of Elongation factor P from Pseudoalteromonas translucida (strain TAC 125).